The following is a 397-amino-acid chain: Cathepsin E-B (397 aa).

The signal sequence occupies residues 1–16 (MRQILVLLLFVTLVYG). A propeptide spans 17-49 (LIRVPLKRQKSIRKTPKEKGKLSHVWTQQGIDM) (activation peptide). Residues 74 to 385 (YFGEISIGTP…DRGNNRVGLA (312 aa)) form the Peptidase A1 domain. N-linked (GlcNAc...) asparagine glycosylation occurs at Asn86. The active site involves Asp92. Cys105 and Cys110 form a disulfide bridge. N-linked (GlcNAc...) asparagine glycosylation is present at Asn130. Cys268 and Cys272 are oxidised to a cystine. The active site involves Asp277. Cys310 and Cys344 are oxidised to a cystine.

Belongs to the peptidase A1 family. Homodimer; disulfide-linked. In terms of processing, glycosylated. Contains high mannose-type oligosaccharide. In terms of tissue distribution, expressed predominantly in the anterior and posterior adult stomach and at much lower levels in the larval foregut.

It is found in the endosome. It carries out the reaction Similar to cathepsin D, but slightly broader specificity.. In terms of biological role, may have a role in immune function. Probably involved in the processing of antigenic peptides during MHC class II-mediated antigen presentation. This chain is Cathepsin E-B (ctse-b), found in Xenopus laevis (African clawed frog).